Reading from the N-terminus, the 219-residue chain is Peptide methionine sulfoxide reductase MsrA (219 aa).

Residue cysteine 58 is part of the active site.

Belongs to the MsrA Met sulfoxide reductase family.

The catalysed reaction is L-methionyl-[protein] + [thioredoxin]-disulfide + H2O = L-methionyl-(S)-S-oxide-[protein] + [thioredoxin]-dithiol. The enzyme catalyses [thioredoxin]-disulfide + L-methionine + H2O = L-methionine (S)-S-oxide + [thioredoxin]-dithiol. Its function is as follows. Has an important function as a repair enzyme for proteins that have been inactivated by oxidation. Catalyzes the reversible oxidation-reduction of methionine sulfoxide in proteins to methionine. In Ectopseudomonas mendocina (strain ymp) (Pseudomonas mendocina), this protein is Peptide methionine sulfoxide reductase MsrA.